The following is a 32-amino-acid chain: Beta-1,4-galactosyltransferase 1 (32 aa).

It belongs to the glycosyltransferase 7 family. Requires Mn(2+) as cofactor. Post-translationally, the soluble form derives from the membrane form by proteolytic processing.

It is found in the golgi apparatus. The protein resides in the golgi stack membrane. The protein localises to the secreted. It localises to the cell membrane. Its subcellular location is the cell projection. It is found in the filopodium. The enzyme catalyses D-glucose + UDP-alpha-D-galactose = lactose + UDP + H(+). It carries out the reaction an N-acetyl-beta-D-glucosaminyl derivative + UDP-alpha-D-galactose = a beta-D-galactosyl-(1-&gt;4)-N-acetyl-beta-D-glucosaminyl derivative + UDP + H(+). It catalyses the reaction N-acetyl-D-glucosamine + UDP-alpha-D-galactose = beta-D-galactosyl-(1-&gt;4)-N-acetyl-D-glucosamine + UDP + H(+). The catalysed reaction is a beta-D-GlcNAc-(1-&gt;3)-beta-D-Gal-(1-&gt;4)-beta-D-Glc-(1&lt;-&gt;1)-Cer(d18:1(4E)) + UDP-alpha-D-galactose = a neolactoside nLc4Cer(d18:1(4E)) + UDP + H(+). The enzyme catalyses a beta-D-glucosylceramide + UDP-alpha-D-galactose = a beta-D-galactosyl-(1-&gt;4)-beta-D-glucosyl-(1&lt;-&gt;1)-ceramide + UDP + H(+). It carries out the reaction a neolactoside IV(3)-beta-GlcNAc-nLc4Cer + UDP-alpha-D-galactose = a neolactoside nLc6Cer + UDP + H(+). Its pathway is protein modification; protein glycosylation. Its function is as follows. This protein is responsible for the synthesis of complex-type N-linked oligosaccharides in many glycoproteins as well as the carbohydrate moieties of glycolipids. The sequence is that of Beta-1,4-galactosyltransferase 1 from Rattus norvegicus (Rat).